A 725-amino-acid chain; its full sequence is N-alpha-acetyltransferase 35, NatC auxiliary subunit (725 aa).

A disordered region spans residues 548 to 573 (ERIMEEQQKGRSSKKTKKKKKVRPLS). The span at 558 to 571 (RSSKKTKKKKKVRP) shows a compositional bias: basic residues.

It belongs to the MAK10 family. In terms of assembly, component of the N-terminal acetyltransferase C (NatC) complex, which is composed of NAA35, NAA38 and NAA30. As to expression, expressed in primary spermatocytes, basal epidermis, interstitial fibroblasts of skeletal muscle, and intestinal crypts.

The protein resides in the cytoplasm. Functionally, auxillary component of the N-terminal acetyltransferase C (NatC) complex which catalyzes acetylation of N-terminal methionine residues. N-terminal acetylation protects proteins from ubiquitination and degradation by the N-end rule pathway. Involved in regulation of apoptosis and proliferation of smooth muscle cells. This Rattus norvegicus (Rat) protein is N-alpha-acetyltransferase 35, NatC auxiliary subunit (Naa35).